The chain runs to 336 residues: Probable allantoicase (336 aa).

This sequence belongs to the allantoicase family.

The catalysed reaction is allantoate + H2O = (S)-ureidoglycolate + urea. It participates in nitrogen metabolism; (S)-allantoin degradation; (S)-ureidoglycolate from allantoate (aminidohydrolase route): step 1/1. This is Probable allantoicase from Acinetobacter baumannii (strain ACICU).